Here is a 116-residue protein sequence, read N- to C-terminus: Dynein light chain Tctex-type 3 (116 aa).

Tyr-4 is subject to 3'-nitrotyrosine.

This sequence belongs to the dynein light chain Tctex-type family. Homodimer. The cytoplasmic dynein 1 complex consists of two catalytic heavy chains (HCs) and a number of non-catalytic subunits presented by intermediate chains (ICs), light intermediate chains (LICs) and light chains (LCs); the composition seems to vary in respect to the IC, LIC and LC composition. The heavy chain homodimer serves as a scaffold for the probable homodimeric assembly of the respective non-catalytic subunits. The ICs and LICs bind directly to the HC dimer and the LCs assemble on the IC dimer. DYNLT1 and DYNLT3 compete for association with dynein IC (DYNC1I1 or DYNC1I2). Self-associates. Interacts with DYNC1I1 and DYNC1I2. Interacts with BUB3. Interacts with SATB1 in nucleus to form complex with matrix attachment regions (MARs) of DNA.

The protein localises to the nucleus. The protein resides in the cytoplasm. It is found in the cytoskeleton. It localises to the chromosome. Its subcellular location is the centromere. The protein localises to the kinetochore. Functionally, acts as one of several non-catalytic accessory components of the cytoplasmic dynein 1 complex that are thought to be involved in linking dynein to cargos and to adapter proteins that regulate dynein function. Cytoplasmic dynein 1 acts as a motor for the intracellular retrograde motility of vesicles and organelles along microtubules. Probably binds BUB3 as part of transport cargo. Required for the efficient progression through mitosis. This chain is Dynein light chain Tctex-type 3 (Dynlt3), found in Mus musculus (Mouse).